A 114-amino-acid chain; its full sequence is Putative pterin-4-alpha-carbinolamine dehydratase (114 aa).

Belongs to the pterin-4-alpha-carbinolamine dehydratase family.

The catalysed reaction is (4aS,6R)-4a-hydroxy-L-erythro-5,6,7,8-tetrahydrobiopterin = (6R)-L-erythro-6,7-dihydrobiopterin + H2O. The chain is Putative pterin-4-alpha-carbinolamine dehydratase from Methylococcus capsulatus (strain ATCC 33009 / NCIMB 11132 / Bath).